A 154-amino-acid polypeptide reads, in one-letter code: Small ribosomal subunit protein eS10 (154 aa).

The tract at residues 91 to 154 (ATMKKQASRP…ERSAPAPQQN (64 aa)) is disordered. Residues 124–135 (RGDRRQGGDRRG) show a composition bias toward basic and acidic residues.

This sequence belongs to the eukaryotic ribosomal protein eS10 family.

The protein resides in the cytoplasm. This Dictyostelium discoideum (Social amoeba) protein is Small ribosomal subunit protein eS10 (rps10).